Reading from the N-terminus, the 174-residue chain is Chromophore lyase CpcS/CpeS 1 (174 aa).

This sequence belongs to the CpcS/CpeS biliprotein lyase family.

Functionally, covalently attaches a chromophore to Cys residue(s) of phycobiliproteins. This is Chromophore lyase CpcS/CpeS 1 from Trichodesmium erythraeum (strain IMS101).